The chain runs to 146 residues: Putative pre-16S rRNA nuclease (146 aa).

The protein belongs to the YqgF nuclease family.

It localises to the cytoplasm. In terms of biological role, could be a nuclease involved in processing of the 5'-end of pre-16S rRNA. The polypeptide is Putative pre-16S rRNA nuclease (Burkholderia mallei (strain SAVP1)).